We begin with the raw amino-acid sequence, 174 residues long: MTLILGIDPGSRITGYGVVRQTARGCEYVASGCIRTGSGELHERLQIVFRGVSEIIAQHGPVTMGIERVFMARNPDSALKLGQARGAAIVAAAEAGLEIAEYSATQVKQAVAGTGGANKEQVMLMVMHLLKLTQKPQIDASDALAIALCHAHTRSSLVPHGLATARRRGGRLRL.

Catalysis depends on residues Asp8, Glu67, and Asp139. Residues Asp8, Glu67, and Asp139 each coordinate Mg(2+).

This sequence belongs to the RuvC family. As to quaternary structure, homodimer which binds Holliday junction (HJ) DNA. The HJ becomes 2-fold symmetrical on binding to RuvC with unstacked arms; it has a different conformation from HJ DNA in complex with RuvA. In the full resolvosome a probable DNA-RuvA(4)-RuvB(12)-RuvC(2) complex forms which resolves the HJ. Mg(2+) serves as cofactor.

It is found in the cytoplasm. It catalyses the reaction Endonucleolytic cleavage at a junction such as a reciprocal single-stranded crossover between two homologous DNA duplexes (Holliday junction).. The RuvA-RuvB-RuvC complex processes Holliday junction (HJ) DNA during genetic recombination and DNA repair. Endonuclease that resolves HJ intermediates. Cleaves cruciform DNA by making single-stranded nicks across the HJ at symmetrical positions within the homologous arms, yielding a 5'-phosphate and a 3'-hydroxyl group; requires a central core of homology in the junction. The consensus cleavage sequence is 5'-(A/T)TT(C/G)-3'. Cleavage occurs on the 3'-side of the TT dinucleotide at the point of strand exchange. HJ branch migration catalyzed by RuvA-RuvB allows RuvC to scan DNA until it finds its consensus sequence, where it cleaves and resolves the cruciform DNA. This Pseudomonas putida (strain W619) protein is Crossover junction endodeoxyribonuclease RuvC.